Here is a 750-residue protein sequence, read N- to C-terminus: Ribosomal RNA large subunit methyltransferase K/L (750 aa).

The 112-residue stretch at 46–157 (TAYRLCLWSR…RGEAILSLDL (112 aa)) folds into the THUMP domain.

This sequence belongs to the methyltransferase superfamily. RlmKL family.

The protein resides in the cytoplasm. It catalyses the reaction guanosine(2445) in 23S rRNA + S-adenosyl-L-methionine = N(2)-methylguanosine(2445) in 23S rRNA + S-adenosyl-L-homocysteine + H(+). The enzyme catalyses guanosine(2069) in 23S rRNA + S-adenosyl-L-methionine = N(2)-methylguanosine(2069) in 23S rRNA + S-adenosyl-L-homocysteine + H(+). Specifically methylates the guanine in position 2445 (m2G2445) and the guanine in position 2069 (m7G2069) of 23S rRNA. This is Ribosomal RNA large subunit methyltransferase K/L from Pseudomonas syringae pv. syringae (strain B728a).